We begin with the raw amino-acid sequence, 450 residues long: Sulfide:quinone oxidoreductase, mitochondrial (450 aa).

FAD contacts are provided by residues 53-54 (AG), Glu-75, Gln-83, and Val-118. An N6-acetyllysine mark is found at Lys-134 and Lys-173. The Cysteine persulfide intermediate role is filled by Cys-201. A disulfide bridge connects residues Cys-201 and Cys-379. Asp-336 lines the FAD pocket. At Ser-343 the chain carries Phosphoserine. 344–347 (KTAA) serves as a coordination point for FAD. Catalysis depends on Cys-379, which acts as the Cysteine persulfide intermediate.

Belongs to the SQRD family. Requires FAD as cofactor.

Its subcellular location is the mitochondrion. The enzyme catalyses ubiquinone-10 + hydrogen sulfide + sulfite + 2 H(+) = ubiquinol-10 + thiosulfate. The catalysed reaction is a quinone + hydrogen sulfide + glutathione + H(+) = S-sulfanylglutathione + a quinol. It catalyses the reaction ubiquinone-10 + hydrogen sulfide + glutathione + H(+) = S-sulfanylglutathione + ubiquinol-10. Its function is as follows. Catalyzes the oxidation of hydrogen sulfide with the help of a quinone, such as ubiquinone-10, giving rise to thiosulfate and ultimately to sulfane (molecular sulfur) atoms. Requires an additional electron acceptor; can use sulfite, sulfide or cyanide (in vitro). It is believed the in vivo electron acceptor is glutathione. This is Sulfide:quinone oxidoreductase, mitochondrial from Mus musculus (Mouse).